A 210-amino-acid chain; its full sequence is Putative tyrosine-protein phosphatase OCA1 (210 aa).

The Tyrosine-protein phosphatase domain occupies 44–204; that stretch reads NFCPVERYLY…EIDREKAPNW (161 aa). C140 serves as the catalytic Phosphocysteine intermediate.

It belongs to the protein-tyrosine phosphatase family.

The protein localises to the cytoplasm. The enzyme catalyses O-phospho-L-tyrosyl-[protein] + H2O = L-tyrosyl-[protein] + phosphate. Putative tyrosine-protein phosphatase required for protection against superoxide stress. In Kluyveromyces lactis (strain ATCC 8585 / CBS 2359 / DSM 70799 / NBRC 1267 / NRRL Y-1140 / WM37) (Yeast), this protein is Putative tyrosine-protein phosphatase OCA1 (OCA1).